A 438-amino-acid chain; its full sequence is Adenylosuccinate synthetase (438 aa).

GTP-binding positions include 13–19 (GDEGKGK) and 41–43 (GHT). Residue D14 is the Proton acceptor of the active site. Positions 14 and 41 each coordinate Mg(2+). IMP-binding positions include 14–17 (DEGK), 39–42 (NAGH), T130, R144, Q225, T240, and R312. H42 serves as the catalytic Proton donor. 308-314 (ATTGRQR) serves as a coordination point for substrate. GTP-binding positions include R314, 340–342 (KLD), and 422–424 (STG).

This sequence belongs to the adenylosuccinate synthetase family. As to quaternary structure, homodimer. Mg(2+) serves as cofactor.

The protein localises to the cytoplasm. The enzyme catalyses IMP + L-aspartate + GTP = N(6)-(1,2-dicarboxyethyl)-AMP + GDP + phosphate + 2 H(+). Its pathway is purine metabolism; AMP biosynthesis via de novo pathway; AMP from IMP: step 1/2. Functionally, plays an important role in the de novo pathway of purine nucleotide biosynthesis. Catalyzes the first committed step in the biosynthesis of AMP from IMP. In Ruthia magnifica subsp. Calyptogena magnifica, this protein is Adenylosuccinate synthetase.